Reading from the N-terminus, the 426-residue chain is Glutamate-1-semialdehyde 2,1-aminomutase (426 aa).

Position 265 is an N6-(pyridoxal phosphate)lysine (K265).

It belongs to the class-III pyridoxal-phosphate-dependent aminotransferase family. HemL subfamily. In terms of assembly, homodimer. It depends on pyridoxal 5'-phosphate as a cofactor.

It is found in the cytoplasm. The enzyme catalyses (S)-4-amino-5-oxopentanoate = 5-aminolevulinate. Its pathway is porphyrin-containing compound metabolism; protoporphyrin-IX biosynthesis; 5-aminolevulinate from L-glutamyl-tRNA(Glu): step 2/2. This Salmonella heidelberg (strain SL476) protein is Glutamate-1-semialdehyde 2,1-aminomutase.